The following is a 48-amino-acid chain: Cytochrome b559 subunit beta (48 aa).

The helical transmembrane segment at 23-39 (WLAVHALAIPTVFFLGA) threads the bilayer. Residue His-27 participates in heme binding.

It belongs to the PsbE/PsbF family. Heterodimer of an alpha subunit and a beta subunit. PSII is composed of 1 copy each of membrane proteins PsbA, PsbB, PsbC, PsbD, PsbE, PsbF, PsbH, PsbI, PsbJ, PsbK, PsbL, PsbM, PsbT, PsbX, PsbY, Psb30/Ycf12, peripheral proteins PsbO, CyanoQ (PsbQ), PsbU, PsbV and a large number of cofactors. It forms dimeric complexes. It depends on heme b as a cofactor.

It is found in the cellular thylakoid membrane. Its function is as follows. This b-type cytochrome is tightly associated with the reaction center of photosystem II (PSII). PSII is a light-driven water:plastoquinone oxidoreductase that uses light energy to abstract electrons from H(2)O, generating O(2) and a proton gradient subsequently used for ATP formation. It consists of a core antenna complex that captures photons, and an electron transfer chain that converts photonic excitation into a charge separation. This chain is Cytochrome b559 subunit beta, found in Prochlorococcus marinus (strain SARG / CCMP1375 / SS120).